Consider the following 136-residue polypeptide: MAKLTVEIVTPEKRILSVQADEAIVPGGRGLFGVRPGHTPFLSLMEPGALTLIESGRRESYFVAGGFVEVGNDKVLVLADAAEPVTGIDVEGARRRMAEAQERMKGMSSEDARFELEQATVRREAARIGAANTARA.

This sequence belongs to the ATPase epsilon chain family. F-type ATPases have 2 components, CF(1) - the catalytic core - and CF(0) - the membrane proton channel. CF(1) has five subunits: alpha(3), beta(3), gamma(1), delta(1), epsilon(1). CF(0) has three main subunits: a, b and c.

It localises to the cell inner membrane. Functionally, produces ATP from ADP in the presence of a proton gradient across the membrane. The chain is ATP synthase epsilon chain from Myxococcus xanthus (strain DK1622).